A 515-amino-acid polypeptide reads, in one-letter code: MTKRALISVSDKAGIVEFAQELKKLGWDIISTGGTKVTLDNAGVDTIAIDDVTGFPEMMDGRVKTLHPNIHGGLLARRDLHSHLQAAKDNNIELIDLVVVNLYPFKETILKPDVTYADAVENIDIGGPSMLRSAAKNHASVTVVVDPADYAVVLDELSANGETTYETRQRLAAKVYRHTASYDALIAEYFTAQVGETKPEKLTLTYDLKQPMRYGENPQQDADFYQKGLPTAYSIASAKQLNGKELSFNNIRDADAAIRIIRDFKDRPTVVALKHMNPCGIGQADDIETAWDYAYEADPVSIFGGIVVLNREVDAATAKKMHGVFLEIIIAPSYTDEALEILTTKKKNLRILELPFDAQDASEAEAEYTGVVGGLLVQNQDVVKESPADWQVVTKRQPTDTEVTALEFAWKAVKYVKSNGIIVTNDHMTLGVGPGQTNRVASVRIAIDQAKGRLDGAVLASDAFFPFADNVEEIAKAGIKAIIQPGGSVRDQESIEAADKYGLTMIFTGVRHFRH.

The 145-residue stretch at 1–145 (MTKRALISVS…KNHASVTVVV (145 aa)) folds into the MGS-like domain.

It belongs to the PurH family.

The enzyme catalyses (6R)-10-formyltetrahydrofolate + 5-amino-1-(5-phospho-beta-D-ribosyl)imidazole-4-carboxamide = 5-formamido-1-(5-phospho-D-ribosyl)imidazole-4-carboxamide + (6S)-5,6,7,8-tetrahydrofolate. The catalysed reaction is IMP + H2O = 5-formamido-1-(5-phospho-D-ribosyl)imidazole-4-carboxamide. Its pathway is purine metabolism; IMP biosynthesis via de novo pathway; 5-formamido-1-(5-phospho-D-ribosyl)imidazole-4-carboxamide from 5-amino-1-(5-phospho-D-ribosyl)imidazole-4-carboxamide (10-formyl THF route): step 1/1. It participates in purine metabolism; IMP biosynthesis via de novo pathway; IMP from 5-formamido-1-(5-phospho-D-ribosyl)imidazole-4-carboxamide: step 1/1. The protein is Bifunctional purine biosynthesis protein PurH of Streptococcus thermophilus (strain ATCC BAA-491 / LMD-9).